The primary structure comprises 209 residues: Uracil phosphoribosyltransferase (209 aa).

5-phospho-alpha-D-ribose 1-diphosphate is bound by residues Arg79, Arg104, and 131–139 (DPMLATGNS). Residues Ile194 and 199-201 (GDA) contribute to the uracil site. Asp200 serves as a coordination point for 5-phospho-alpha-D-ribose 1-diphosphate.

It belongs to the UPRTase family. Mg(2+) serves as cofactor.

It carries out the reaction UMP + diphosphate = 5-phospho-alpha-D-ribose 1-diphosphate + uracil. It functions in the pathway pyrimidine metabolism; UMP biosynthesis via salvage pathway; UMP from uracil: step 1/1. With respect to regulation, allosterically activated by GTP. Functionally, catalyzes the conversion of uracil and 5-phospho-alpha-D-ribose 1-diphosphate (PRPP) to UMP and diphosphate. The sequence is that of Uracil phosphoribosyltransferase from Acidovorax sp. (strain JS42).